The following is a 465-amino-acid chain: Cysteine--tRNA ligase (465 aa).

Cys-27 lines the Zn(2+) pocket. A 'HIGH' region motif is present at residues 29–39; it reads PTVYNFFHIGN. Residues Cys-207, His-232, and Glu-236 each coordinate Zn(2+). The 'KMSKS' region signature appears at 264 to 268; that stretch reads KMSKS. Residue Lys-267 coordinates ATP.

This sequence belongs to the class-I aminoacyl-tRNA synthetase family. Monomer. The cofactor is Zn(2+).

The protein resides in the cytoplasm. The catalysed reaction is tRNA(Cys) + L-cysteine + ATP = L-cysteinyl-tRNA(Cys) + AMP + diphosphate. The sequence is that of Cysteine--tRNA ligase from Clostridium botulinum (strain ATCC 19397 / Type A).